The sequence spans 149 residues: Transcriptional regulator MraZ (149 aa).

SpoVT-AbrB domains are found at residues 7-54 (KYVN…GISH) and 83-126 (AVQL…QPQN).

The protein belongs to the MraZ family. In terms of assembly, forms oligomers.

It is found in the cytoplasm. The protein localises to the nucleoid. This Rickettsia conorii (strain ATCC VR-613 / Malish 7) protein is Transcriptional regulator MraZ.